The primary structure comprises 699 residues: MDLKFATFSSEIELPFYSALFSSKLDHDKLDSSARPVLGLYEPRSQANPEASTRMQILGSALTSDQDESGPLGMTRAEGYIKNVNTIEEFKNTDKNAMIKKAGEQIWDAIQDGTIYSCPSLLASFRILSYADLKKYRFTYWFAFPALHSEPQWKRTEPIGRLNSDESTALVERIGTWRYMVDRREHGFFLAKKVRGEASGPRSSLDDPGVDIGYRWDIGSLRDFETGFFNDAAEEDRYVAFVDPSNYPEYPSWPLRNLLILVRQRYRLNKVQILCYRDTQPRRHEARSIILPLAMDQVGDVELKSMPKVTGWERNGNGDLRPRVANLAEYMDPTRLADQAVDLNLKLMKWRLAPNLDLDTIKNTKCLLLGAGTLGSYVSRNLLGWGVRKITFIDYGSVSFSNPVRQPLFKFEDCHNGGKPKAIQAAEALREIYPGVDVEGYALSVPMLDHPIHNEAKTKAEFDKLKELIDSHDAIFLLMDTRESRWLPTLMGKAANKIVMNAALGFDTYVVMRHGAKPLDDSEDTLGCYFCNDVVVAADSMKDQTLDQQCTVTRPGVAAIASALLVELLTSILQHPLKQHAPAPISAGTGSAVSYERDPHDHPLGLVPHQVRGFLSNFQNMIIRGKSYPQCSACSKPVLDAYREGGWDFVKTALASRDYVAELSGLAEVQRLAEKAAAEMQWSEDEEGMGEEEGEGELI.

The short motif at 370–375 (GAGTLG) is the GXGXXG motif element. Cys550 acts as the Glycyl thioester intermediate in catalysis. The interval 653 to 691 (ALASRDYVAELSGLAEVQRLAEKAAAEMQWSEDEEGMGE) is homodimerization.

Belongs to the ATG7 family. In terms of assembly, homodimer. Interacts with ATG8 through a thioester bond between Cys-550 and the C-terminal Gly of ATG8 and with ATG12 through a thioester bond between Cys-550 and the C-terminal Gly of ATG12. Also interacts with ATG3.

It localises to the cytoplasm. The protein localises to the preautophagosomal structure. Functionally, E1-like activating enzyme involved in the 2 ubiquitin-like systems required for cytoplasm to vacuole transport (Cvt) and autophagy. Activates ATG12 for its conjugation with ATG5 and ATG8 for its conjugation with phosphatidylethanolamine. Both systems are needed for the ATG8 association to Cvt vesicles and autophagosomes membranes. Autophagy is essential for maintenance of amino acid levels and protein synthesis under nitrogen starvation. Required for selective autophagic degradation of the nucleus (nucleophagy) as well as for mitophagy which contributes to regulate mitochondrial quantity and quality by eliminating the mitochondria to a basal level to fulfill cellular energy requirements and preventing excess ROS production. Required for normal mycelial growth and conidiogenesis. The chain is Ubiquitin-like modifier-activating enzyme ATG7 from Sordaria macrospora (strain ATCC MYA-333 / DSM 997 / K(L3346) / K-hell).